The following is a 427-amino-acid chain: Enolase (427 aa).

Position 163 (Gln-163) interacts with (2R)-2-phosphoglycerate. The active-site Proton donor is Glu-205. Positions 242, 287, and 314 each coordinate Mg(2+). Lys-339, Arg-368, Ser-369, and Lys-390 together coordinate (2R)-2-phosphoglycerate. Residue Lys-339 is the Proton acceptor of the active site.

This sequence belongs to the enolase family. It depends on Mg(2+) as a cofactor.

Its subcellular location is the cytoplasm. It is found in the secreted. The protein resides in the cell surface. The enzyme catalyses (2R)-2-phosphoglycerate = phosphoenolpyruvate + H2O. Its pathway is carbohydrate degradation; glycolysis; pyruvate from D-glyceraldehyde 3-phosphate: step 4/5. Its function is as follows. Catalyzes the reversible conversion of 2-phosphoglycerate (2-PG) into phosphoenolpyruvate (PEP). It is essential for the degradation of carbohydrates via glycolysis. The sequence is that of Enolase from Solibacter usitatus (strain Ellin6076).